The following is a 159-amino-acid chain: MKIKLITVGKLKEKYLKEGIAEYSKRLGRFTKLDMIELPDEKTPDKASQAENEQILKKEADRIMSKIGERDFVIALAIEGKQFPSEEFSQRISDIAVNGYSDITFIIGGSLGLDSCIKKRANLLMSFGQLTLPHQLMKLVLIEQIYRAFMIQQGSPYHK.

S-adenosyl-L-methionine-binding positions include Leu76, Gly108, and 127–132 (FGQLTL).

The protein belongs to the RNA methyltransferase RlmH family. Homodimer.

It is found in the cytoplasm. The enzyme catalyses pseudouridine(1915) in 23S rRNA + S-adenosyl-L-methionine = N(3)-methylpseudouridine(1915) in 23S rRNA + S-adenosyl-L-homocysteine + H(+). In terms of biological role, specifically methylates the pseudouridine at position 1915 (m3Psi1915) in 23S rRNA. The polypeptide is Ribosomal RNA large subunit methyltransferase H (Streptococcus suis (strain 05ZYH33)).